Consider the following 456-residue polypeptide: UDP-N-acetylmuramoylalanine--D-glutamate ligase (456 aa).

119-125 (GTNGKTT) is a binding site for ATP.

Belongs to the MurCDEF family.

The protein resides in the cytoplasm. It carries out the reaction UDP-N-acetyl-alpha-D-muramoyl-L-alanine + D-glutamate + ATP = UDP-N-acetyl-alpha-D-muramoyl-L-alanyl-D-glutamate + ADP + phosphate + H(+). Its pathway is cell wall biogenesis; peptidoglycan biosynthesis. In terms of biological role, cell wall formation. Catalyzes the addition of glutamate to the nucleotide precursor UDP-N-acetylmuramoyl-L-alanine (UMA). The chain is UDP-N-acetylmuramoylalanine--D-glutamate ligase (murD) from Enterococcus faecalis (strain ATCC 700802 / V583).